The chain runs to 310 residues: Fructose-bisphosphate aldolase/6-deoxy-5-ketofructose 1-phosphate synthase (310 aa).

Substrate is bound by residues 48–49 (DQ), His53, Asp57, and Trp180. The Proton donor role is filled by Tyr182. Substrate is bound by residues Arg184, 213 to 215 (KVN), 241 to 243 (AGG), and 270 to 271 (GR). Lys213 functions as the Schiff-base intermediate with dihydroxyacetone-P in the catalytic mechanism. Residue Lys213 is the Schiff-base intermediate with substrate of the active site.

It belongs to the DeoC/FbaB aldolase family.

It carries out the reaction beta-D-fructose 1,6-bisphosphate = D-glyceraldehyde 3-phosphate + dihydroxyacetone phosphate. The catalysed reaction is beta-D-fructose 1,6-bisphosphate + methylglyoxal = 1-deoxy-D-threo-hexo-2,5-diulose 6-phosphate + D-glyceraldehyde 3-phosphate. The enzyme catalyses beta-D-fructose 1-phosphate + methylglyoxal = 1-deoxy-D-threo-hexo-2,5-diulose 6-phosphate + D-glyceraldehyde. Its pathway is aromatic compound metabolism. Functionally, catalyzes the transaldolization of either fructose-1-P or fructose-1,6-bisphosphate with methylglyoxal to produce 6-deoxy-5-ketofructose-1-phosphate (DKFP). Also catalyzes the reversible aldol condensation of dihydroxyacetone phosphate (DHAP or glycerone-phosphate) with glyceraldehyde 3-phosphate (G3P or GAP) to produce fructose 1,6-bisphosphate (FBP). The protein is Fructose-bisphosphate aldolase/6-deoxy-5-ketofructose 1-phosphate synthase of Methanocaldococcus jannaschii (strain ATCC 43067 / DSM 2661 / JAL-1 / JCM 10045 / NBRC 100440) (Methanococcus jannaschii).